The sequence spans 79 residues: CDC42 small effector protein 1-A (79 aa).

2 S-palmitoyl cysteine lipidation sites follow: Cys-10 and Cys-11. In terms of domain architecture, CRIB spans 30–43 (IGEPMNFVHLTHVG).

This sequence belongs to the CDC42SE/SPEC family.

It is found in the cytoplasm. Its subcellular location is the cytoskeleton. It localises to the cell membrane. Functionally, probably involved in the organization of the actin cytoskeleton by acting downstream of CDC42, inducing actin filament assembly. The sequence is that of CDC42 small effector protein 1-A (cdc42se1-a) from Xenopus laevis (African clawed frog).